Here is a 1074-residue protein sequence, read N- to C-terminus: Probable phospholipid-transporting ATPase tat-5 (1074 aa).

Residues 1–26 (MGKRKKNDESSSSSSQKPCVSSSSDD) are disordered. Residues 10–26 (SSSSSSQKPCVSSSSDD) show a composition bias toward low complexity. A run of 4 helical transmembrane segments spans residues 118–138 (FVPI…FLLM), 143–163 (FIPA…GFVL), 354–374 (LTKL…AMKG), and 378–398 (LWYR…PISL). D442 functions as the 4-aspartylphosphate intermediate in the catalytic mechanism. D442, K443, T444, E524, F570, K575, K594, R623, T624, T704, G705, D706, R786, and K792 together coordinate ATP. Residue D442 coordinates Mg(2+). Residue T444 coordinates Mg(2+). D813 contributes to the Mg(2+) binding site. Residues N816 and D817 each contribute to the ATP site. D817 provides a ligand contact to Mg(2+). The next 5 membrane-spanning stretches (helical) occupy residues 886 to 906 (AIFS…VLMV), 954 to 974 (IWVL…LLVF), 978 to 998 (FIHV…IMVA), 1006 to 1026 (WAML…LILF), and 1038 to 1058 (WVFI…LYIV).

It belongs to the cation transport ATPase (P-type) (TC 3.A.3) family. Type IV subfamily. Requires Mg(2+) as cofactor.

It localises to the cell membrane. The enzyme catalyses ATP + H2O + phospholipidSide 1 = ADP + phosphate + phospholipidSide 2.. Its function is as follows. Plays a role in regulating membrane trafficking of cargo proteins during embryogenesis. Regulates snx-3 retromer-mediated endosomal sorting of mig-14, a transporter of Wnt egl-20 morphogen. Together with mon-2 and pad-1, may participate in the formation of endosomal carriers that direct mig-14 trafficking back to Golgi, away from lysosomal degradation. Required for Wnt egl-20 gradient formation along the anteroposterior body axis and migration of QL neuroblast descendants toward the posterior part. Maintains phosphatidylethanolamine (PE) asymmetry at the cell membrane and prevents the budding of ectosome vesicles that affect intercellular communication and morphogenesis. This is Probable phospholipid-transporting ATPase tat-5 (tat-5) from Caenorhabditis elegans.